The following is a 494-amino-acid chain: UPF0371 protein SPT_0390 (494 aa).

This sequence belongs to the UPF0371 family.

In Streptococcus pneumoniae (strain Taiwan19F-14), this protein is UPF0371 protein SPT_0390.